The sequence spans 573 residues: Potassium-transporting ATPase potassium-binding subunit (573 aa).

10 consecutive transmembrane segments (helical) span residues 3 to 23 (AEGL…TPLL), 65 to 85 (GYTL…YALL), 136 to 156 (GLTV…VALI), 179 to 199 (LYVL…QGVP), 254 to 274 (LTNL…IYSF), 286 to 306 (ALWT…WWAE), 383 to 403 (AGLY…GLMV), 423 to 443 (VIAV…TTVV), 489 to 509 (GLGL…LAIA), and 531 to 551 (LFIT…FFPA).

The protein belongs to the KdpA family. The system is composed of three essential subunits: KdpA, KdpB and KdpC.

The protein localises to the cell inner membrane. Functionally, part of the high-affinity ATP-driven potassium transport (or Kdp) system, which catalyzes the hydrolysis of ATP coupled with the electrogenic transport of potassium into the cytoplasm. This subunit binds the periplasmic potassium ions and delivers the ions to the membrane domain of KdpB through an intramembrane tunnel. The chain is Potassium-transporting ATPase potassium-binding subunit from Rhodospirillum centenum (strain ATCC 51521 / SW).